Consider the following 157-residue polypeptide: Peptide methionine sulfoxide reductase MsrA (157 aa).

Residue C10 is part of the active site.

This sequence belongs to the MsrA Met sulfoxide reductase family.

The enzyme catalyses L-methionyl-[protein] + [thioredoxin]-disulfide + H2O = L-methionyl-(S)-S-oxide-[protein] + [thioredoxin]-dithiol. It carries out the reaction [thioredoxin]-disulfide + L-methionine + H2O = L-methionine (S)-S-oxide + [thioredoxin]-dithiol. In terms of biological role, has an important function as a repair enzyme for proteins that have been inactivated by oxidation. Catalyzes the reversible oxidation-reduction of methionine sulfoxide in proteins to methionine. The sequence is that of Peptide methionine sulfoxide reductase MsrA from Clostridium botulinum (strain Okra / Type B1).